The following is a 252-amino-acid chain: Thiazole synthase (252 aa).

The Schiff-base intermediate with DXP role is filled by Lys-91. 1-deoxy-D-xylulose 5-phosphate is bound by residues Gly-152, 179-180, and 201-202; these read AG and NT.

The protein belongs to the ThiG family. As to quaternary structure, homotetramer. Forms heterodimers with either ThiH or ThiS.

Its subcellular location is the cytoplasm. It carries out the reaction [ThiS sulfur-carrier protein]-C-terminal-Gly-aminoethanethioate + 2-iminoacetate + 1-deoxy-D-xylulose 5-phosphate = [ThiS sulfur-carrier protein]-C-terminal Gly-Gly + 2-[(2R,5Z)-2-carboxy-4-methylthiazol-5(2H)-ylidene]ethyl phosphate + 2 H2O + H(+). It participates in cofactor biosynthesis; thiamine diphosphate biosynthesis. In terms of biological role, catalyzes the rearrangement of 1-deoxy-D-xylulose 5-phosphate (DXP) to produce the thiazole phosphate moiety of thiamine. Sulfur is provided by the thiocarboxylate moiety of the carrier protein ThiS. In vitro, sulfur can be provided by H(2)S. The polypeptide is Thiazole synthase (Gluconobacter oxydans (strain 621H) (Gluconobacter suboxydans)).